Consider the following 365-residue polypeptide: MTRSYRITLLPGDGIGPEIMAVTVDILRAIGRQFDLNFEFEEALIGGSAIDATGEPLPEATLATCRNSDAVLLAAIGGYKWDSLPRSQRPETGLLGLRAGLGLFANLRPAAILPQLVDASSLKREVIEGVDLMVVRELTGGIYFGEPKGCFADEQGRQRAFNTMVYREDEIDRIGRVAFDIARKRGKRLCSVDKANVLEVSQLWRDRMTLLGSDYADVELSHLYVDNAAMQLVRWPKQFDTIVTGNLFGDILSDIAAMLTGSIGMLPSASLGAEGPGVFEPVHGSAPDIAGQDKANPLAQVLSAAMMLRYGLDEPEAAARIEAAVNQVLDQGYRTGDLYSEGMTLVGCKGMGDALLAALESPVSA.

78–91 (GYKWDSLPRSQRPE) serves as a coordination point for NAD(+). Substrate is bound by residues Arg-98, Arg-108, Arg-136, and Asp-226. Mg(2+) contacts are provided by Asp-226, Asp-250, and Asp-254. Residue 284 to 296 (GSAPDIAGQDKAN) participates in NAD(+) binding.

This sequence belongs to the isocitrate and isopropylmalate dehydrogenases family. LeuB type 1 subfamily. As to quaternary structure, homodimer. Mg(2+) serves as cofactor. Mn(2+) is required as a cofactor.

The protein resides in the cytoplasm. It catalyses the reaction (2R,3S)-3-isopropylmalate + NAD(+) = 4-methyl-2-oxopentanoate + CO2 + NADH. The protein operates within amino-acid biosynthesis; L-leucine biosynthesis; L-leucine from 3-methyl-2-oxobutanoate: step 3/4. Functionally, catalyzes the oxidation of 3-carboxy-2-hydroxy-4-methylpentanoate (3-isopropylmalate) to 3-carboxy-4-methyl-2-oxopentanoate. The product decarboxylates to 4-methyl-2 oxopentanoate. This chain is 3-isopropylmalate dehydrogenase, found in Synechococcus elongatus (strain ATCC 33912 / PCC 7942 / FACHB-805) (Anacystis nidulans R2).